The chain runs to 127 residues: Large ribosomal subunit protein bL17 (127 aa).

The protein belongs to the bacterial ribosomal protein bL17 family. In terms of assembly, part of the 50S ribosomal subunit. Contacts protein L32.

The chain is Large ribosomal subunit protein bL17 from Vibrio vulnificus (strain CMCP6).